The chain runs to 514 residues: Endoglucanase MaCel5A (514 aa).

A signal peptide spans methionine 1 to alanine 23. Low complexity-rich tracts occupy residues glycine 91–glycine 114 and serine 179–glycine 201. Disordered stretches follow at residues glycine 91 to glycine 118 and serine 179 to serine 208. Glutamate 346 (proton donor) is an active-site residue. Residue glutamate 439 is the Nucleophile of the active site.

The protein belongs to the glycosyl hydrolase 5 (cellulase A) family.

The catalysed reaction is Endohydrolysis of (1-&gt;4)-beta-D-glucosidic linkages in cellulose, lichenin and cereal beta-D-glucans.. Exhibits strong halostability and halotolerance. The activity increases about tenfold in the presence of 0.5 M NaCl, and about fivefold in the presence of 4.0 M NaCl. Tolerates detergents, but activity is decreased in the presence of EDTA. Activity is enhanced in the presence of Mn(2+), Ca(2+), Ba(2+) or Mg(2+), and decreased in the presence of Zn(2+), Cu(2+), Al(3+) or Fe(3+). Endoglucanase that exhibits highest activity toward barley beta-glucan, lower activity toward carboxymethyl cellulose (CMC-Na), and marginal activity toward laminarin and xylan. The chain is Endoglucanase MaCel5A from Microbulbifer sp. (strain ALW1).